The sequence spans 456 residues: Cobyrinate a,c-diamide synthase (456 aa).

The region spanning 247–439 (PIAIARDRAF…LHLHFGGKPW (193 aa)) is the GATase cobBQ-type domain. Cys-330 serves as the catalytic Nucleophile.

The protein belongs to the CobB/CbiA family. Requires Mg(2+) as cofactor.

The catalysed reaction is cob(II)yrinate + 2 L-glutamine + 2 ATP + 2 H2O = cob(II)yrinate a,c diamide + 2 L-glutamate + 2 ADP + 2 phosphate + 2 H(+). It functions in the pathway cofactor biosynthesis; adenosylcobalamin biosynthesis; cob(II)yrinate a,c-diamide from sirohydrochlorin (anaerobic route): step 10/10. Its function is as follows. Catalyzes the ATP-dependent amidation of the two carboxylate groups at positions a and c of cobyrinate, using either L-glutamine or ammonia as the nitrogen source. In Synechococcus sp. (strain ATCC 27144 / PCC 6301 / SAUG 1402/1) (Anacystis nidulans), this protein is Cobyrinate a,c-diamide synthase.